Here is a 512-residue protein sequence, read N- to C-terminus: Kynurenine 3-monooxygenase (512 aa).

The protein belongs to the aromatic-ring hydroxylase family. KMO subfamily. FAD is required as a cofactor.

Its subcellular location is the mitochondrion outer membrane. It carries out the reaction L-kynurenine + NADPH + O2 + H(+) = 3-hydroxy-L-kynurenine + NADP(+) + H2O. It functions in the pathway cofactor biosynthesis; NAD(+) biosynthesis; quinolinate from L-kynurenine: step 1/3. In terms of biological role, catalyzes the hydroxylation of L-kynurenine (L-Kyn) to form 3-hydroxy-L-kynurenine (L-3OHKyn). Required for synthesis of quinolinic acid. The polypeptide is Kynurenine 3-monooxygenase (bna4) (Aspergillus fumigatus (strain ATCC MYA-4609 / CBS 101355 / FGSC A1100 / Af293) (Neosartorya fumigata)).